Here is a 385-residue protein sequence, read N- to C-terminus: Acetate kinase (385 aa).

Position 9 (Asn-9) interacts with Mg(2+). Lys-16 serves as a coordination point for ATP. Arg-75 is a substrate binding site. The Proton donor/acceptor role is filled by Asp-132. ATP-binding positions include 192 to 196 (HLGNG), 266 to 268 (DFR), and 314 to 318 (GIGEN). Glu-368 contacts Mg(2+).

Belongs to the acetokinase family. Homodimer. Mg(2+) is required as a cofactor. It depends on Mn(2+) as a cofactor.

It is found in the cytoplasm. The catalysed reaction is acetate + ATP = acetyl phosphate + ADP. It participates in metabolic intermediate biosynthesis; acetyl-CoA biosynthesis; acetyl-CoA from acetate: step 1/2. Catalyzes the formation of acetyl phosphate from acetate and ATP. Can also catalyze the reverse reaction. The sequence is that of Acetate kinase from Mycobacterium bovis (strain ATCC BAA-935 / AF2122/97).